We begin with the raw amino-acid sequence, 497 residues long: tRNA-2-methylthio-N(6)-dimethylallyladenosine synthase (497 aa).

Residues Met-1–Leu-50 form a disordered region. The MTTase N-terminal domain maps to Gly-48–Glu-165. The [4Fe-4S] cluster site is built by Cys-57, Cys-94, Cys-128, Cys-202, Cys-206, and Cys-209. The region spanning Arg-188 to Asp-430 is the Radical SAM core domain. In terms of domain architecture, TRAM spans Lys-433–Thr-496.

The protein belongs to the methylthiotransferase family. MiaB subfamily. As to quaternary structure, monomer. [4Fe-4S] cluster serves as cofactor.

It localises to the cytoplasm. The enzyme catalyses N(6)-dimethylallyladenosine(37) in tRNA + (sulfur carrier)-SH + AH2 + 2 S-adenosyl-L-methionine = 2-methylsulfanyl-N(6)-dimethylallyladenosine(37) in tRNA + (sulfur carrier)-H + 5'-deoxyadenosine + L-methionine + A + S-adenosyl-L-homocysteine + 2 H(+). Functionally, catalyzes the methylthiolation of N6-(dimethylallyl)adenosine (i(6)A), leading to the formation of 2-methylthio-N6-(dimethylallyl)adenosine (ms(2)i(6)A) at position 37 in tRNAs that read codons beginning with uridine. The chain is tRNA-2-methylthio-N(6)-dimethylallyladenosine synthase from Xylella fastidiosa (strain M12).